Consider the following 909-residue polypeptide: Lon protease homolog 2, peroxisomal (909 aa).

A Lon N-terminal domain is found at 1–230 (MAPVRAPTAR…KVIELLDRQV (230 aa)). Residues 249-269 (FPMDPDSTKPGKVKPPVKAPG) form a disordered region. Residue 463–470 (GPPGVGKT) participates in ATP binding. The Lon proteolytic domain occupies 706–893 (TSRPGIVTGL…WEAIRYVWPD (188 aa)). Active-site residues include serine 799 and lysine 842. Residues 907–909 (SRL) carry the Microbody targeting signal motif.

This sequence belongs to the peptidase S16 family.

It localises to the peroxisome matrix. It is found in the cytoplasm. It carries out the reaction Hydrolysis of proteins in presence of ATP.. Functionally, ATP-dependent serine protease that mediates the selective degradation of misfolded and unassembled polypeptides in the peroxisomal matrix. Necessary for type 2 peroxisome targeting signal (PTS2)-containing protein processing and facilitates peroxisome matrix protein import. This chain is Lon protease homolog 2, peroxisomal, found in Sordaria macrospora (strain ATCC MYA-333 / DSM 997 / K(L3346) / K-hell).